Here is a 361-residue protein sequence, read N- to C-terminus: Large ribosomal subunit protein uL3 (361 aa).

The tract at residues 339–361 (RPPKKKPPVQRPQITYVSVESKQ) is disordered. The segment covering 350–361 (PQITYVSVESKQ) has biased composition (polar residues).

The protein belongs to the universal ribosomal protein uL3 family. Part of the 50S ribosomal subunit. Forms a cluster with proteins L14 and L24e.

Functionally, one of the primary rRNA binding proteins, it binds directly near the 3'-end of the 23S rRNA, where it nucleates assembly of the 50S subunit. This Pyrococcus abyssi (strain GE5 / Orsay) protein is Large ribosomal subunit protein uL3.